The primary structure comprises 501 residues: Xylulose kinase (501 aa).

Residue 81-82 coordinates substrate; it reads MH. Catalysis depends on D239, which acts as the Proton acceptor.

Belongs to the FGGY kinase family.

The catalysed reaction is D-xylulose + ATP = D-xylulose 5-phosphate + ADP + H(+). Its function is as follows. Catalyzes the phosphorylation of D-xylulose to D-xylulose 5-phosphate. This chain is Xylulose kinase, found in Lactococcus lactis subsp. lactis (strain IL1403) (Streptococcus lactis).